The chain runs to 752 residues: Microtubule-associated protein tau (752 aa).

The segment at 1-567 (MAEPRQEFDT…PVPMPDLKNV (567 aa)) is disordered. N-acetylalanine is present on Ala2. At Tyr18 the chain carries Phosphotyrosine. Lys33 is covalently cross-linked (Glycyl lysine isopeptide (Lys-Gly) (interchain with G-Cter in ubiquitin)). Phosphoserine occurs at positions 35 and 50. Positions 50-60 (SETSDAKSTPT) are enriched in polar residues. Thr58, Thr60, and Thr100 each carry phosphothreonine. Residues 142–151 (SDWTHQQVPS) are compositionally biased toward polar residues. The segment covering 173–182 (RPEDVERSHP) has biased composition (basic and acidic residues). Residues Ser191 and Ser204 each carry the phosphoserine modification. Basic and acidic residues predominate over residues 192–204 (PQKEAWGKDRLGS). The span at 205-218 (EEEVDEDITMDESS) shows a compositional bias: acidic residues. Residues 219–229 (QESPPSQASLA) are compositionally biased toward low complexity. Residues 233-252 (ATPQARSVSASGVSGETTSI) show a composition bias toward polar residues. 2 stretches are compositionally biased toward basic and acidic residues: residues 289 to 313 (EEGHEAAPEFTFHVEIKASAPKEQD) and 374 to 385 (SKDRTGNDEKKA). Composition is skewed to polar residues over residues 387-400 (TSTPSCAKTPSNRP) and 432-446 (KYVSSVTPRNGSPGT). Thr464 is subject to Phosphothreonine. Omega-N-methylarginine is present on Arg466. Lys474 carries the post-translational modification N6,N6-dimethyllysine; alternate. Lys474 carries the N6-acetyllysine; alternate modification. Thr480, Thr486, and Thr487 each carry phosphothreonine. At Ser489 the chain carries Phosphoserine. Thr492 bears the Phosphothreonine mark. Phosphoserine is present on residues Ser496, Ser502, and Ser506. A compositionally biased stretch (low complexity) spans 498–525 (EPPKSGERSGYSSPGSPGTPGSRSRTPS). Tyr508 is subject to Phosphotyrosine. 2 positions are modified to phosphoserine: Ser509 and Ser510. At Ser513 the chain carries Phosphoserine; by CK1, PDPK1 and TTBK1. Thr516 and Thr523 each carry phosphothreonine. A Phosphoserine modification is found at Ser525. Position 528 is a phosphothreonine (Thr528). The residue at position 536 (Lys536) is an N6-acetyllysine. Residue Thr542 is modified to Phosphothreonine. 2 positions are modified to phosphoserine: Ser546 and Ser548. Tau/MAP repeat units lie at residues 555–585 (QTAPVPMPDLKNVRSKIGSTENLKHQPGGGK), 586–616 (VQIINKKLDLSNVQSKCGSKDNIKHVPGGGS), 617–647 (VHIVYKPVDLSKVTSKCGSLGNIHHKPGGGQ), and 648–679 (VEVKSEKLDFKDRVQSKIGSLDNITHVPGGGN). Residue Lys565 forms a Glycyl lysine isopeptide (Lys-Gly) (interchain with G-Cter in ubiquitin) linkage. N6-acetyllysine; alternate is present on Lys570. Lys570 is modified (N6-methyllysine; alternate). Residue Lys570 forms a Glycyl lysine isopeptide (Lys-Gly) (interchain with G-Cter in ubiquitin); alternate linkage. At Ser573 the chain carries Phosphoserine. Residue Lys578 forms a Glycyl lysine isopeptide (Lys-Gly) (interchain with G-Cter in ubiquitin) linkage. Residue Lys592 is modified to N6-acetyllysine; alternate. Lys592 is covalently cross-linked (Glycyl lysine isopeptide (Lys-Gly) (interchain with G-Cter in ubiquitin); alternate). Residues Ser596 and Ser600 each carry the phosphoserine modification. Lys601 carries the post-translational modification N6-acetyllysine. Cys602 and Cys633 are joined by a disulfide. Ser604 bears the Phosphoserine mark. Residue Lys609 is modified to N6-acetyllysine; alternate. Lys609 is covalently cross-linked (Glycyl lysine isopeptide (Lys-Gly) (interchain with G-Cter in ubiquitin); alternate). A Phosphoserine modification is found at Ser616. Lys622 carries the N6,N6-dimethyllysine; alternate modification. 3 positions are modified to N6-acetyllysine; alternate: Lys622, Lys628, and Lys632. Residues Lys622, Lys628, and Lys632 each participate in a glycyl lysine isopeptide (Lys-Gly) (interchain with G-Cter in ubiquitin); alternate cross-link. A Phosphoserine modification is found at Ser635. N6-acetyllysine; alternate is present on residues Lys642, Lys654, and Lys658. Glycyl lysine isopeptide (Lys-Gly) (interchain with G-Cter in ubiquitin); alternate cross-links involve residues Lys642, Lys654, and Lys658. An Omega-N-methylarginine modification is found at Arg660. The residue at position 663 (Ser663) is a Phosphoserine. A Glycyl lysine isopeptide (Lys-Gly) (interchain with G-Cter in ubiquitin) cross-link involves residue Lys664. Ser667 carries the post-translational modification Phosphoserine. Residue Lys680 is modified to N6-acetyllysine; alternate. A Glycyl lysine isopeptide (Lys-Gly) (interchain with G-Cter in ubiquitin); alternate cross-link involves residue Lys680. Lys686 is covalently cross-linked (Glycyl lysine isopeptide (Lys-Gly) (interchain with G-Cter in ubiquitin)). N6-acetyllysine; alternate is present on Lys696. A Glycyl lysine isopeptide (Lys-Gly) (interchain with G-Cter in ubiquitin); alternate cross-link involves residue Lys696. Position 705 is a phosphotyrosine (Tyr705). At Ser707 the chain carries Phosphoserine; by CK1 and PDPK1. Position 711 is a phosphoserine (Ser711). Residue Thr714 is modified to Phosphothreonine. Ser715 bears the Phosphoserine; by CK1 and PDPK1 mark. Ser720, Ser727, and Ser733 each carry phosphoserine. Residue Thr738 is modified to Phosphothreonine.

In terms of assembly, interacts with MARK1, MARK2, MARK3 and MARK4. Interacts with SQSTM1 when polyubiquitinated. Interacts with PSMC2 through SQSTM1. Interacts with FKBP4. Binds to CSNK1D. Interacts with SGK1. Interacts with EPM2A; the interaction dephosphorylates MAPT at Ser-388. Interacts with PIN1. Interacts with LRRK2. Interacts with LRP1, leading to endocytosis; this interaction is reduced in the presence of LRPAP1/RAP. Polyubiquitinated. Requires functional TRAF6 and may provoke SQSTM1-dependent degradation by the proteasome. In terms of processing, phosphorylated at various serine and threonine residues in S-P or T-P motifs by proline-directed protein kinases (PDPK1, CDK1, CDK5, GSK3, MAPK) (a few sites per protein in interphase, more in mitosis), and at serine residues in K-X-G-S motifs by MAP/microtubule affinity-regulating kinase (MARK1, MARK2, MARK3, MARK4), causing detachment from microtubules, and their disassembly. Fetal Tau is much more phosphorylated than adult Tau. Phosphorylation at Ser-573 by BRSK1 and BRSK2 in neurons affects ability to bind microtubules and plays a role in neuron polarization. Phosphorylated by PHK. Dephosphorylation at several serine and threonine residues by the serine/threonine phosphatase PPP5C. Phosphorylation at Ser-204 by SGK1 mediates microtubule depolymerization and neurite formation in hippocampal neurons. As to expression, expressed in neurons. The larger forms (isoform tau-A and isoform tau-B) are preferentially expressed in the peripheral nervous system while the other are expressed in the central nervous system. Low amounts of the larger forms are also found in limited areas of the CNS.

It localises to the cytoplasm. Its subcellular location is the cytosol. The protein localises to the cell membrane. It is found in the cytoskeleton. The protein resides in the cell projection. It localises to the axon. Its subcellular location is the dendrite. The protein localises to the secreted. Functionally, promotes microtubule assembly and stability, and might be involved in the establishment and maintenance of neuronal polarity. The C-terminus binds axonal microtubules while the N-terminus binds neural plasma membrane components, suggesting that tau functions as a linker protein between both. Axonal polarity is predetermined by tau localization (in the neuronal cell) in the domain of the cell body defined by the centrosome. The short isoforms allow plasticity of the cytoskeleton whereas the longer isoforms may preferentially play a role in its stabilization. This is Microtubule-associated protein tau from Rattus norvegicus (Rat).